Consider the following 403-residue polypeptide: Betaine--homocysteine S-methyltransferase 1 (403 aa).

Positions 8-311 (KGLLERLDAG…YHTRAIAEEL (304 aa)) constitute a Hcy-binding domain. Zn(2+)-binding residues include C214, C296, and C297.

As to quaternary structure, homotetramer. It depends on Zn(2+) as a cofactor.

It is found in the cytoplasm. The catalysed reaction is L-homocysteine + glycine betaine = N,N-dimethylglycine + L-methionine. It participates in amine and polyamine degradation; betaine degradation; sarcosine from betaine: step 1/2. Its pathway is amino-acid biosynthesis; L-methionine biosynthesis via de novo pathway; L-methionine from L-homocysteine (BhmT route): step 1/1. Functionally, involved in the regulation of homocysteine metabolism. Converts betaine and homocysteine to dimethylglycine and methionine, respectively. This reaction is also required for the irreversible oxidation of choline. This chain is Betaine--homocysteine S-methyltransferase 1 (bhmt), found in Xenopus laevis (African clawed frog).